We begin with the raw amino-acid sequence, 356 residues long: Glutamate 5-kinase (356 aa).

Residue lysine 6 participates in ATP binding. Residues serine 46, aspartate 135, and asparagine 147 each contribute to the substrate site. An ATP-binding site is contributed by 202–208; that stretch reads TGGMRSK. In terms of domain architecture, PUA spans 265–342; it reads KGIIVVDRGA…SEVRKLLNTT (78 aa).

Belongs to the glutamate 5-kinase family.

It localises to the cytoplasm. It catalyses the reaction L-glutamate + ATP = L-glutamyl 5-phosphate + ADP. It participates in amino-acid biosynthesis; L-proline biosynthesis; L-glutamate 5-semialdehyde from L-glutamate: step 1/2. Its function is as follows. Catalyzes the transfer of a phosphate group to glutamate to form L-glutamate 5-phosphate. The polypeptide is Glutamate 5-kinase (Aquifex aeolicus (strain VF5)).